The following is a 289-amino-acid chain: Cell division protein ZipA (289 aa).

Methionine 1 is a topological domain (periplasmic). Residues 2-22 (EIGLREWLIVIGIIVIAGILF) traverse the membrane as a helical segment. Topologically, residues 23–289 (DGWRRMRGSK…ERRALTQRRG (267 aa)) are cytoplasmic. The segment at 48 to 141 (DEEETTSAEV…KPAQRITEDK (94 aa)) is disordered. Basic and acidic residues-rich tracts occupy residues 64–77 (LDTHKEPQLDEHDL), 85–106 (REGKRSNSDKRGNSDKKRKDEP), and 123–141 (GRDDDFPDDKPAQRITEDK).

It belongs to the ZipA family. As to quaternary structure, interacts with FtsZ via their C-terminal domains.

It localises to the cell inner membrane. Functionally, essential cell division protein that stabilizes the FtsZ protofilaments by cross-linking them and that serves as a cytoplasmic membrane anchor for the Z ring. Also required for the recruitment to the septal ring of downstream cell division proteins. This chain is Cell division protein ZipA, found in Pseudomonas savastanoi pv. phaseolicola (strain 1448A / Race 6) (Pseudomonas syringae pv. phaseolicola (strain 1448A / Race 6)).